A 436-amino-acid polypeptide reads, in one-letter code: ATP-dependent 6-phosphofructokinase (436 aa).

Residues glycine 90, 155-156, and 180-183 each bind ATP; these read RG and GDGT. Aspartate 181 is a binding site for Mg(2+). Residues 209-211, 254-256, glutamate 307, and 362-365 contribute to the substrate site; these read TID, MGR, and YMIR. The active-site Proton acceptor is the aspartate 211.

The protein belongs to the phosphofructokinase type A (PFKA) family. PPi-dependent PFK group II subfamily. Atypical ATP-dependent clade 'X' sub-subfamily. As to quaternary structure, homodimer. Aggregates to a homotetramer after activation by ATP. The cofactor is Mg(2+).

The protein resides in the cytoplasm. It carries out the reaction beta-D-fructose 6-phosphate + ATP = beta-D-fructose 1,6-bisphosphate + ADP + H(+). It functions in the pathway carbohydrate degradation; glycolysis; D-glyceraldehyde 3-phosphate and glycerone phosphate from D-glucose: step 3/4. Activated by nucleoside triphosphates. Inhibited by phosphoenolpyruvate. EDTA and biphosphonates play the role of inhibitors of kinase activity. Its function is as follows. Catalyzes the phosphorylation of D-fructose 6-phosphate to fructose 1,6-bisphosphate by ATP, the first committing step of glycolysis. The protein is ATP-dependent 6-phosphofructokinase (PPi-PFK) of Entamoeba histolytica (strain ATCC 30459 / HM-1:IMSS / ABRM).